The chain runs to 783 residues: B-cell scaffold protein with ankyrin repeats (783 aa).

Residues methionine 1–leucine 154 are interaction with ITPR2. Residues asparagine 25 to isoleucine 153 enclose the TIR domain. One can recognise a DBB domain in the interval valine 199–leucine 326. 2 ANK repeats span residues glutamate 341–alanine 370 and aspartate 377–arginine 407. Disordered regions lie at residues phenylalanine 422–glutamine 521, methionine 538–glutamate 586, serine 604–glutamate 624, and arginine 641–aspartate 670. Basic and acidic residues predominate over residues arginine 444–serine 479. The span at histidine 505–proline 515 shows a compositional bias: pro residues. Residues alanine 549–glutamate 565 are compositionally biased toward basic and acidic residues. Positions alanine 566–glutamate 586 are enriched in acidic residues. Over residues proline 610–isoleucine 620 the composition is skewed to pro residues. Residues arginine 641–methionine 660 are compositionally biased toward basic and acidic residues. Tyrosine 649 is subject to Phosphotyrosine.

Interacts with LYN, ITPR1 and ITPR2. In terms of processing, phosphorylated on tyrosines upon BCR activation. In terms of tissue distribution, specifically expressed in spleen. Highly expressed in immature B-cells and recirculating B-cells, and at low levels in pro-B and pre-B cells.

Involved in B-cell receptor (BCR)-induced Ca(2+) mobilization from intracellular stores. Promotes Lyn-mediated phosphorylation of IP3 receptors 1 and 2. The sequence is that of B-cell scaffold protein with ankyrin repeats (Bank1) from Mus musculus (Mouse).